The primary structure comprises 282 residues: 2-dehydro-3-deoxyphosphooctonate aldolase (282 aa).

It belongs to the KdsA family.

Its subcellular location is the cytoplasm. It catalyses the reaction D-arabinose 5-phosphate + phosphoenolpyruvate + H2O = 3-deoxy-alpha-D-manno-2-octulosonate-8-phosphate + phosphate. It participates in carbohydrate biosynthesis; 3-deoxy-D-manno-octulosonate biosynthesis; 3-deoxy-D-manno-octulosonate from D-ribulose 5-phosphate: step 2/3. The protein operates within bacterial outer membrane biogenesis; lipopolysaccharide biosynthesis. This is 2-dehydro-3-deoxyphosphooctonate aldolase from Shewanella sp. (strain W3-18-1).